We begin with the raw amino-acid sequence, 237 residues long: Large ribosomal subunit protein uL3 (237 aa).

Disordered stretches follow at residues 133–155 (ASHGNSITHRSHGSTGQRQDPGK) and 213–237 (PENAPKPAGLRAGAKAEAAATEGAE). Residues 135 to 150 (HGNSITHRSHGSTGQR) show a composition bias toward polar residues. Residue glutamine 151 is modified to N5-methylglutamine. The segment covering 220 to 237 (AGLRAGAKAEAAATEGAE) has biased composition (low complexity).

It belongs to the universal ribosomal protein uL3 family. As to quaternary structure, part of the 50S ribosomal subunit. Forms a cluster with proteins L14 and L19. Methylated by PrmB.

One of the primary rRNA binding proteins, it binds directly near the 3'-end of the 23S rRNA, where it nucleates assembly of the 50S subunit. The chain is Large ribosomal subunit protein uL3 from Brucella canis (strain ATCC 23365 / NCTC 10854 / RM-666).